We begin with the raw amino-acid sequence, 285 residues long: Probable endonuclease 4 (285 aa).

Histidine 69, histidine 109, glutamate 145, aspartate 179, histidine 182, histidine 216, aspartate 229, histidine 231, and glutamate 261 together coordinate Zn(2+).

This sequence belongs to the AP endonuclease 2 family. Zn(2+) serves as cofactor.

The enzyme catalyses Endonucleolytic cleavage to 5'-phosphooligonucleotide end-products.. In terms of biological role, endonuclease IV plays a role in DNA repair. It cleaves phosphodiester bonds at apurinic or apyrimidinic (AP) sites, generating a 3'-hydroxyl group and a 5'-terminal sugar phosphate. The sequence is that of Probable endonuclease 4 from Cronobacter sakazakii (strain ATCC BAA-894) (Enterobacter sakazakii).